Consider the following 348-residue polypeptide: tRNA N6-adenosine threonylcarbamoyltransferase (348 aa).

The Fe cation site is built by H118 and H122. Substrate contacts are provided by residues 140-144, D173, G186, D190, and N279; that span reads LVSGG. A Fe cation-binding site is contributed by D309.

The protein belongs to the KAE1 / TsaD family. Fe(2+) serves as cofactor.

It localises to the cytoplasm. The enzyme catalyses L-threonylcarbamoyladenylate + adenosine(37) in tRNA = N(6)-L-threonylcarbamoyladenosine(37) in tRNA + AMP + H(+). Functionally, required for the formation of a threonylcarbamoyl group on adenosine at position 37 (t(6)A37) in tRNAs that read codons beginning with adenine. Is involved in the transfer of the threonylcarbamoyl moiety of threonylcarbamoyl-AMP (TC-AMP) to the N6 group of A37, together with TsaE and TsaB. TsaD likely plays a direct catalytic role in this reaction. This Lactiplantibacillus plantarum (strain ATCC BAA-793 / NCIMB 8826 / WCFS1) (Lactobacillus plantarum) protein is tRNA N6-adenosine threonylcarbamoyltransferase.